A 469-amino-acid polypeptide reads, in one-letter code: Maintenance of mitochondrial morphology protein 1 (469 aa).

At 1–25 (MADEVPTAVPLATPAGSSSLSFTQG) the chain is on the lumenal side. A helical transmembrane segment spans residues 26–46 (FLLGQLSIAILIFCFIKFFIF). Over 47–469 (GEPPSADDRA…GMRWRGALPR (423 aa)) the chain is Cytoplasmic. Positions 124-363 (QPESLDWFNV…EPRFQQIVLP (240 aa)) constitute an SMP-LTD domain. Over residues 266–299 (SSSPPSTTAPMPSPTSNTHRSSSPSRPASSSGAP) the composition is skewed to low complexity. Disordered regions lie at residues 266-304 (SSSP…HRPT) and 426-469 (EAEG…ALPR). Composition is skewed to basic and acidic residues over residues 426–439 (EAEG…EIRA) and 449–462 (ERSR…DGMR).

Belongs to the MMM1 family. As to quaternary structure, homodimer. Component of the ER-mitochondria encounter structure (ERMES) or MDM complex, composed of mmm1, MDM10, MDM12 and MDM34. A mmm1 homodimer associates with one molecule of MDM12 on each side in a pairwise head-to-tail manner, and the SMP-LTD domains of mmm1 and MDM12 generate a continuous hydrophobic tunnel for phospholipid trafficking.

The protein resides in the endoplasmic reticulum membrane. Component of the ERMES/MDM complex, which serves as a molecular tether to connect the endoplasmic reticulum (ER) and mitochondria. Components of this complex are involved in the control of mitochondrial shape and protein biogenesis, and function in nonvesicular lipid trafficking between the ER and mitochondria. The MDM12-mmm1 subcomplex functions in the major beta-barrel assembly pathway that is responsible for biogenesis of all outer membrane beta-barrel proteins, and acts in a late step after the SAM complex. The MDM10-MDM12-mmm1 subcomplex further acts in the TOM40-specific pathway after the action of the MDM12-mmm1 complex. Essential for establishing and maintaining the structure of mitochondria and maintenance of mtDNA nucleoids. The polypeptide is Maintenance of mitochondrial morphology protein 1 (Pyrenophora tritici-repentis (strain Pt-1C-BFP) (Wheat tan spot fungus)).